A 919-amino-acid polypeptide reads, in one-letter code: TRPM8 channel-associated factor 2 (919 aa).

Positions 543–842 (DVWMSTGLYL…TYLQLQEVFG (300 aa)) constitute a Peptidase M60 domain.

It belongs to the TCAF family. Interacts with TRPM8 (via N-terminus and C-terminus domains); the interaction inhibits TRPM8 channel activity. Interacts with TRPV6.

Its subcellular location is the cell membrane. In terms of biological role, negatively regulates the plasma membrane cation channel TRPM8 activity. Involved in the recruitment of TRPM8 to the cell surface. Promotes prostate cancer cell migration stimulation in a TRPM8-dependent manner. The polypeptide is TRPM8 channel-associated factor 2 (Mus musculus (Mouse)).